Here is a 327-residue protein sequence, read N- to C-terminus: Gibberellin 2-beta-dioxygenase 1 (327 aa).

The 106-residue stretch at 171 to 276 (QSDCLFRVNH…RLSMIYFCGP (106 aa)) folds into the Fe2OG dioxygenase domain. Residues His200, Asp202, and His257 each contribute to the Fe cation site. Arg267 is a catalytic residue.

Belongs to the iron/ascorbate-dependent oxidoreductase family. GA2OX subfamily. Fe cation serves as cofactor. In terms of tissue distribution, predominantly expressed in roots, flowers, young fruits and seeds.

It carries out the reaction gibberellin A1 + 2-oxoglutarate + O2 = gibberellin A8 + succinate + CO2. It participates in plant hormone biosynthesis; gibberellin biosynthesis. Catalyzes the 2-beta-hydroxylation of several biologically active gibberellins, leading to the homeostatic regulation of their endogenous level. Catabolism of gibberellins (GAs) plays a central role in plant development. Converts GA9/GA20 to GA51/GA29 and GA4/GA1 to GA34/GA8. The sequence is that of Gibberellin 2-beta-dioxygenase 1 (GA2OX1) from Pisum sativum (Garden pea).